Here is a 27-residue protein sequence, read N- to C-terminus: MVKTVAVMVGSLRKDSLAHKLMKVLQK.

Homodimer. FAD is required as a cofactor.

The catalysed reaction is 2 a Fe(II)-siderophore + NAD(+) + H(+) = 2 a Fe(III)-siderophore + NADH. Functionally, reductase activity that acts on Fe(3+)-chelates and uses both NADH and NADPH as electron donors. May play a role in iron uptake. The protein is Ferric reductase B (ferB) of Paracoccus denitrificans.